The sequence spans 520 residues: Cholesterol side-chain cleavage enzyme, mitochondrial (520 aa).

A mitochondrion-targeting transit peptide spans methionine 1–glycine 39. A disordered region spans residues leucine 19–proline 47. Cysteine 461 is a binding site for heme.

Belongs to the cytochrome P450 family. Interacts with FDX1/adrenodoxin. Heme serves as cofactor.

The protein localises to the mitochondrion inner membrane. The catalysed reaction is 6 reduced [adrenodoxin] + cholesterol + 3 O2 + 6 H(+) = 4-methylpentanal + pregnenolone + 6 oxidized [adrenodoxin] + 4 H2O. The enzyme catalyses 2 reduced [adrenodoxin] + cholesterol + O2 + 2 H(+) = (22R)-hydroxycholesterol + 2 oxidized [adrenodoxin] + H2O. It catalyses the reaction (22R)-hydroxycholesterol + 2 reduced [adrenodoxin] + O2 + 2 H(+) = (20R,22R)-20,22-dihydroxycholesterol + 2 oxidized [adrenodoxin] + H2O. It carries out the reaction (20R,22R)-20,22-dihydroxycholesterol + 2 reduced [adrenodoxin] + O2 + 2 H(+) = 4-methylpentanal + pregnenolone + 2 oxidized [adrenodoxin] + 2 H2O. It participates in lipid metabolism; C21-steroid hormone metabolism. The protein operates within steroid metabolism; cholesterol metabolism. A cytochrome P450 monooxygenase that catalyzes the side-chain hydroxylation and cleavage of cholesterol to pregnenolone, the precursor of most steroid hormones. Catalyzes three sequential oxidation reactions of cholesterol, namely the hydroxylation at C22 followed with the hydroxylation at C20 to yield 20R,22R-hydroxycholesterol that is further cleaved between C20 and C22 to yield the C21-steroid pregnenolone and 4-methylpentanal. Mechanistically, uses molecular oxygen inserting one oxygen atom into a substrate and reducing the second into a water molecule. Two electrons are provided by NADPH via a two-protein mitochondrial transfer system comprising flavoprotein FDXR (adrenodoxin/ferredoxin reductase) and nonheme iron-sulfur protein FDX1 or FDX2 (adrenodoxin/ferredoxin). The sequence is that of Cholesterol side-chain cleavage enzyme, mitochondrial (CYP11A1) from Equus caballus (Horse).